Consider the following 211-residue polypeptide: Thiamine-phosphate synthase (211 aa).

Residues 37-41 (QLRIK) and asparagine 69 each bind 4-amino-2-methyl-5-(diphosphooxymethyl)pyrimidine. Residues aspartate 70 and aspartate 89 each contribute to the Mg(2+) site. Serine 108 lines the 4-amino-2-methyl-5-(diphosphooxymethyl)pyrimidine pocket. Position 134–136 (134–136 (TQT)) interacts with 2-[(2R,5Z)-2-carboxy-4-methylthiazol-5(2H)-ylidene]ethyl phosphate. A 4-amino-2-methyl-5-(diphosphooxymethyl)pyrimidine-binding site is contributed by lysine 137. Residues glycine 166 and 186-187 (VS) each bind 2-[(2R,5Z)-2-carboxy-4-methylthiazol-5(2H)-ylidene]ethyl phosphate.

It belongs to the thiamine-phosphate synthase family. The cofactor is Mg(2+).

The enzyme catalyses 2-[(2R,5Z)-2-carboxy-4-methylthiazol-5(2H)-ylidene]ethyl phosphate + 4-amino-2-methyl-5-(diphosphooxymethyl)pyrimidine + 2 H(+) = thiamine phosphate + CO2 + diphosphate. It carries out the reaction 2-(2-carboxy-4-methylthiazol-5-yl)ethyl phosphate + 4-amino-2-methyl-5-(diphosphooxymethyl)pyrimidine + 2 H(+) = thiamine phosphate + CO2 + diphosphate. It catalyses the reaction 4-methyl-5-(2-phosphooxyethyl)-thiazole + 4-amino-2-methyl-5-(diphosphooxymethyl)pyrimidine + H(+) = thiamine phosphate + diphosphate. Its pathway is cofactor biosynthesis; thiamine diphosphate biosynthesis; thiamine phosphate from 4-amino-2-methyl-5-diphosphomethylpyrimidine and 4-methyl-5-(2-phosphoethyl)-thiazole: step 1/1. In terms of biological role, condenses 4-methyl-5-(beta-hydroxyethyl)thiazole monophosphate (THZ-P) and 2-methyl-4-amino-5-hydroxymethyl pyrimidine pyrophosphate (HMP-PP) to form thiamine monophosphate (TMP). The sequence is that of Thiamine-phosphate synthase from Citrobacter koseri (strain ATCC BAA-895 / CDC 4225-83 / SGSC4696).